The following is a 600-amino-acid chain: Aspartate--tRNA(Asp/Asn) ligase (600 aa).

Residue Glu-187 participates in L-aspartate binding. The interval 211 to 214 (QIFK) is aspartate. Residues Arg-233 and His-463 each contribute to the L-aspartate site. Residue 233 to 235 (RDE) coordinates ATP. An ATP-binding site is contributed by Glu-497. Arg-504 lines the L-aspartate pocket. An ATP-binding site is contributed by 549–552 (GVDR).

The protein belongs to the class-II aminoacyl-tRNA synthetase family. Type 1 subfamily. Homodimer.

The protein resides in the cytoplasm. It catalyses the reaction tRNA(Asx) + L-aspartate + ATP = L-aspartyl-tRNA(Asx) + AMP + diphosphate. Its function is as follows. Aspartyl-tRNA synthetase with relaxed tRNA specificity since it is able to aspartylate not only its cognate tRNA(Asp) but also tRNA(Asn). Reaction proceeds in two steps: L-aspartate is first activated by ATP to form Asp-AMP and then transferred to the acceptor end of tRNA(Asp/Asn). The sequence is that of Aspartate--tRNA(Asp/Asn) ligase from Wolbachia pipientis subsp. Culex pipiens (strain wPip).